A 472-amino-acid chain; its full sequence is Karilysin (472 aa).

The N-terminal stretch at 1 to 20 (MKRFILLFFLSTIAIFKVYS) is a signal peptide. Positions 21 to 34 (QRLYDNGPLTGDNN) are cleaved as a propeptide — activation peptide. Residues His-102, Asp-104, His-117, His-133, and His-155 each coordinate Zn(2+). Catalysis depends on Glu-156, which acts as the Proton donor/acceptor. The Zn(2+) site is built by His-159 and His-165. Residues 196 to 386 (YGYPFSISGP…AVSCSRTISP (191 aa)) constitute a propeptide, removed in short form. The propeptide at 387 to 472 (FTLSPNPATD…QTYTQKLIKK (86 aa)) is removed in long form.

This sequence belongs to the peptidase M10A family. Zn(2+) serves as cofactor. Post-translationally, processes itself into the mature 18-kDa enzyme (Kly18) through sequential autoproteolytic cleavage at both the N- and C-termini. However, the maturation intermediate Kly38 is found to be more active than Kly18 and the rate for its processing is slow, which raises the question as to whether Kly38 is a physiologically relevant entity.

The protein localises to the secreted. Autoprocessing and proteolytic activity are completely inhibited by EDTA and 1,10-phenanthroline in vitro. Proteolytic activity is 3-fold enhanced by Ca(2+) due to stabilization of the protein structure but inhibited by an excess of Zn(2+). Inhibitory studies of karilysin identified several phage display-selected peptides with apparent inhibition constants (Ki) in the micromolar range, among which is the tetrapeptide SWFP (Ki=10.7 uM). Functionally, metalloprotease able to cleave casein, gelatin, elastin, fibrinogen and fibronectin. Shows exclusive preference for hydrophobic residues, especially Leu, Tyr and Met, at the P1' position of substrates, and for Pro or Ala at P3. Can efficiently cleave the antimicrobial peptide LL-37 which is a component of the immune system, leading to a significant reduction of its bactericidal activity. Is also able to inhibit all pathways of the human complement system. The classical and lectin complement pathways are inhibited because of the efficient degradation of mannose-binding lectin, ficolin-2, ficolin-3, and C4 by karilysin, whereas inhibition of the terminal pathway is caused by cleavage of C5. Thus, karilysin appears to be a major virulence factor of T.forsythia that contributes to evasion of the human immune response and periodontal disease. Seems to act synergistically with gingipains from the periodontal pathogen P.gingivalis present at the same sites of infection. The chain is Karilysin (kly) from Tannerella forsythia (strain ATCC 43037 / JCM 10827 / CCUG 21028 A / KCTC 5666 / FDC 338) (Bacteroides forsythus).